Reading from the N-terminus, the 267-residue chain is Imidazole glycerol phosphate synthase subunit HisF (267 aa).

Residues D22 and D141 contribute to the active site.

It belongs to the HisA/HisF family. In terms of assembly, heterodimer of HisH and HisF.

It is found in the cytoplasm. It carries out the reaction 5-[(5-phospho-1-deoxy-D-ribulos-1-ylimino)methylamino]-1-(5-phospho-beta-D-ribosyl)imidazole-4-carboxamide + L-glutamine = D-erythro-1-(imidazol-4-yl)glycerol 3-phosphate + 5-amino-1-(5-phospho-beta-D-ribosyl)imidazole-4-carboxamide + L-glutamate + H(+). It functions in the pathway amino-acid biosynthesis; L-histidine biosynthesis; L-histidine from 5-phospho-alpha-D-ribose 1-diphosphate: step 5/9. In terms of biological role, IGPS catalyzes the conversion of PRFAR and glutamine to IGP, AICAR and glutamate. The HisF subunit catalyzes the cyclization activity that produces IGP and AICAR from PRFAR using the ammonia provided by the HisH subunit. This Mycobacterium bovis (strain ATCC BAA-935 / AF2122/97) protein is Imidazole glycerol phosphate synthase subunit HisF.